Here is a 358-residue protein sequence, read N- to C-terminus: Mitogen-activated protein kinase 1 (358 aa).

The residue at position 2 (Ala-2) is an N-acetylalanine. One can recognise a Protein kinase domain in the interval 23 to 311 (YTNLSYIGEG…VEQALAHPYL (289 aa)). Ser-27 carries the phosphoserine; by SGK1 modification. ATP-binding positions include 29 to 37 (IGEGAYGMV) and Lys-52. Asp-147 functions as the Proton acceptor in the catalytic mechanism. At Thr-183 the chain carries Phosphothreonine; by MAP2K1 and MAP2K2. Residues 183–185 (TEY) carry the TXY motif. A Phosphotyrosine; by MAP2K1 and MAP2K2 modification is found at Tyr-185. The residue at position 188 (Thr-188) is a Phosphothreonine; by autocatalysis. Residues Ser-244, Ser-246, and Ser-282 each carry the phosphoserine modification.

It belongs to the protein kinase superfamily. CMGC Ser/Thr protein kinase family. MAP kinase subfamily. Binds both upstream activators and downstream substrates in multimolecular complexes. This interaction inhibits its tyrosine-kinase activity. Interacts with ADAM15, ARHGEF2, ARRB2, DAPK1 (via death domain), HSF4, IER3, IPO7, NISCH, SGK1, and isoform 1 of NEK2. Interacts (via phosphorylated form) with TPR (via C-terminal region and phosphorylated form); the interaction requires dimerization of MAPK1/ERK2 and increases following EGF stimulation. Interacts with MAP2K1. Interacts with DUSP6. Interacts (phosphorylated form) with CAV2 ('Tyr-19'-phosphorylated form); the interaction, promoted by insulin, leads to nuclear location and MAPK1 activation. Interacts with DCC. Interacts with MORG1. Interacts with PEA15. Interacts with MKNK2. MKNK2 isoform 1 binding prevents from dephosphorylation and inactivation. The phosphorylated form interacts with PML. Interacts with STYX. Interacts with CDK2AP2. Interacts with CAVIN4. Interacts with DUSP7; the interaction enhances DUSP7 phosphatase activity. Interacts with GIT1; this interaction is necessary for MAPK1 localization to focal adhesions. Interacts with ZNF263. Interacts with phosphoglycerate kinase PGK1; the interaction is direct, occurs under hypoxic conditions, and promotes interaction between PGK1 and PIN1. Requires Mg(2+) as cofactor. Post-translationally, dually phosphorylated on Thr-183 and Tyr-185, which activates the enzyme. Ligand-activated ALK induces tyrosine phosphorylation. Dephosphorylated by PTPRJ at Tyr-185. Phosphorylated upon FLT3 and KIT signaling. Dephosphorylated by DUSP1 and DUSP2 at Thr-183 and Tyr-185. ISGylated. In terms of processing, ubiquitinated by TRIM15 via 'Lys-63'-linked ubiquitination; leading to activation. Deubiquitinated by CYLD. In terms of tissue distribution, widely expressed.

Its subcellular location is the cytoplasm. The protein resides in the cytoskeleton. It localises to the spindle. The protein localises to the nucleus. It is found in the microtubule organizing center. Its subcellular location is the centrosome. The protein resides in the membrane. It localises to the caveola. The protein localises to the cell junction. It is found in the focal adhesion. It carries out the reaction L-seryl-[protein] + ATP = O-phospho-L-seryl-[protein] + ADP + H(+). It catalyses the reaction L-threonyl-[protein] + ATP = O-phospho-L-threonyl-[protein] + ADP + H(+). Phosphorylated by MAP2K1/MEK1 and MAP2K2/MEK2 on Thr-183 and Tyr-185 in response to external stimuli like insulin or NGF. Both phosphorylations are required for activity. This phosphorylation causes dramatic conformational changes, which enable full activation and interaction of MAPK1/ERK2 with its substrates. Phosphorylation on Ser-27 by SGK1 results in its activation by enhancing its interaction with MAP2K1/MEK1 and MAP2K2/MEK2. Dephosphorylated and inactivated by DUSP1, DUSP3, DUSP6 and DUSP9. Inactivated by pyrimidylpyrrole inhibitors. Serine/threonine kinase which acts as an essential component of the MAP kinase signal transduction pathway. MAPK1/ERK2 and MAPK3/ERK1 are the 2 MAPKs which play an important role in the MAPK/ERK cascade. They participate also in a signaling cascade initiated by activated KIT and KITLG/SCF. Depending on the cellular context, the MAPK/ERK cascade mediates diverse biological functions such as cell growth, adhesion, survival and differentiation through the regulation of transcription, translation, cytoskeletal rearrangements. The MAPK/ERK cascade also plays a role in initiation and regulation of meiosis, mitosis, and postmitotic functions in differentiated cells by phosphorylating a number of transcription factors. About 160 substrates have already been discovered for ERKs. Many of these substrates are localized in the nucleus, and seem to participate in the regulation of transcription upon stimulation. However, other substrates are found in the cytosol as well as in other cellular organelles, and those are responsible for processes such as translation, mitosis and apoptosis. Moreover, the MAPK/ERK cascade is also involved in the regulation of the endosomal dynamics, including lysosome processing and endosome cycling through the perinuclear recycling compartment (PNRC); as well as in the fragmentation of the Golgi apparatus during mitosis. The substrates include transcription factors (such as ATF2, BCL6, ELK1, ERF, FOS, HSF4 or SPZ1), cytoskeletal elements (such as CANX, CTTN, GJA1, MAP2, MAPT, PXN, SORBS3 or STMN1), regulators of apoptosis (such as BAD, BTG2, CASP9, DAPK1, IER3, MCL1 or PPARG), regulators of translation (such as EIF4EBP1 and FXR1) and a variety of other signaling-related molecules (like ARHGEF2, DCC, FRS2 or GRB10). Protein kinases (such as RAF1, RPS6KA1/RSK1, RPS6KA3/RSK2, RPS6KA2/RSK3, RPS6KA6/RSK4, SYK, MKNK1/MNK1, MKNK2/MNK2, RPS6KA5/MSK1, RPS6KA4/MSK2, MAPKAPK3 or MAPKAPK5) and phosphatases (such as DUSP1, DUSP4, DUSP6 or DUSP16) are other substrates which enable the propagation the MAPK/ERK signal to additional cytosolic and nuclear targets, thereby extending the specificity of the cascade. Mediates phosphorylation of TPR in response to EGF stimulation. May play a role in the spindle assembly checkpoint. Phosphorylates PML and promotes its interaction with PIN1, leading to PML degradation. Phosphorylates CDK2AP2. Phosphorylates phosphoglycerate kinase PGK1 under hypoxic conditions to promote its targeting to the mitochondrion and suppress the formation of acetyl-coenzyme A from pyruvate. In terms of biological role, acts as a transcriptional repressor. Binds to a [GC]AAA[GC] consensus sequence. Repress the expression of interferon gamma-induced genes. Seems to bind to the promoter of CCL5, DMP1, IFIH1, IFITM1, IRF7, IRF9, LAMP3, OAS1, OAS2, OAS3 and STAT1. Transcriptional activity is independent of kinase activity. This is Mitogen-activated protein kinase 1 from Mus musculus (Mouse).